Here is a 248-residue protein sequence, read N- to C-terminus: Pyridoxine 5'-phosphate synthase (248 aa).

N12 serves as a coordination point for 3-amino-2-oxopropyl phosphate. Position 14–15 (14–15 (DH)) interacts with 1-deoxy-D-xylulose 5-phosphate. Position 23 (R23) interacts with 3-amino-2-oxopropyl phosphate. The active-site Proton acceptor is the H48. 1-deoxy-D-xylulose 5-phosphate-binding residues include R50 and H55. Catalysis depends on E75, which acts as the Proton acceptor. T105 contributes to the 1-deoxy-D-xylulose 5-phosphate binding site. H196 (proton donor) is an active-site residue. 3-amino-2-oxopropyl phosphate is bound by residues G197 and 218 to 219 (GH).

Belongs to the PNP synthase family. Homooctamer; tetramer of dimers.

The protein resides in the cytoplasm. It catalyses the reaction 3-amino-2-oxopropyl phosphate + 1-deoxy-D-xylulose 5-phosphate = pyridoxine 5'-phosphate + phosphate + 2 H2O + H(+). It participates in cofactor biosynthesis; pyridoxine 5'-phosphate biosynthesis; pyridoxine 5'-phosphate from D-erythrose 4-phosphate: step 5/5. Catalyzes the complicated ring closure reaction between the two acyclic compounds 1-deoxy-D-xylulose-5-phosphate (DXP) and 3-amino-2-oxopropyl phosphate (1-amino-acetone-3-phosphate or AAP) to form pyridoxine 5'-phosphate (PNP) and inorganic phosphate. The protein is Pyridoxine 5'-phosphate synthase of Pseudomonas fluorescens (strain ATCC BAA-477 / NRRL B-23932 / Pf-5).